We begin with the raw amino-acid sequence, 1085 residues long: Error-prone DNA polymerase (1085 aa).

The protein belongs to the DNA polymerase type-C family. DnaE2 subfamily.

The protein resides in the cytoplasm. The catalysed reaction is DNA(n) + a 2'-deoxyribonucleoside 5'-triphosphate = DNA(n+1) + diphosphate. Its function is as follows. DNA polymerase involved in damage-induced mutagenesis and translesion synthesis (TLS). It is not the major replicative DNA polymerase. The polypeptide is Error-prone DNA polymerase (Symbiobacterium thermophilum (strain DSM 24528 / JCM 14929 / IAM 14863 / T)).